Consider the following 439-residue polypeptide: Probable serine/threonine-protein kinase WNK6 (439 aa).

Residues 1–30 are disordered; sequence MMPPKPAAEDVADEQPEPPDEDPDVAEADP. Acidic residues predominate over residues 10–27; the sequence is DVADEQPEPPDEDPDVAE. The Protein kinase domain occupies 35 to 293; the sequence is LRYREIIGSG…ASELLKSPFL (259 aa). Residues 116 to 119 and lysine 166 contribute to the ATP site; that span reads TELF. Aspartate 183 functions as the Proton acceptor in the catalytic mechanism.

Belongs to the protein kinase superfamily. Ser/Thr protein kinase family. WNK subfamily.

It carries out the reaction L-seryl-[protein] + ATP = O-phospho-L-seryl-[protein] + ADP + H(+). The enzyme catalyses L-threonyl-[protein] + ATP = O-phospho-L-threonyl-[protein] + ADP + H(+). This chain is Probable serine/threonine-protein kinase WNK6 (WNK6), found in Oryza sativa subsp. japonica (Rice).